A 169-amino-acid chain; its full sequence is NADH-quinone oxidoreductase subunit I (169 aa).

4Fe-4S ferredoxin-type domains follow at residues 60–90 and 100–129; these read LRRY…IEAE and TRYD…EGPN. 8 residues coordinate [4Fe-4S] cluster: C70, C73, C76, C80, C109, C112, C115, and C119.

It belongs to the complex I 23 kDa subunit family. In terms of assembly, NDH-1 is composed of 14 different subunits. Subunits NuoA, H, J, K, L, M, N constitute the membrane sector of the complex. Requires [4Fe-4S] cluster as cofactor.

The protein localises to the cell membrane. It carries out the reaction a quinone + NADH + 5 H(+)(in) = a quinol + NAD(+) + 4 H(+)(out). NDH-1 shuttles electrons from NADH, via FMN and iron-sulfur (Fe-S) centers, to quinones in the respiratory chain. The immediate electron acceptor for the enzyme in this species is believed to be ubiquinone. Couples the redox reaction to proton translocation (for every two electrons transferred, four hydrogen ions are translocated across the cytoplasmic membrane), and thus conserves the redox energy in a proton gradient. In Wolbachia pipientis wMel, this protein is NADH-quinone oxidoreductase subunit I.